The following is a 216-amino-acid chain: LexA repressor (216 aa).

A DNA-binding region (H-T-H motif) is located at residues arginine 28–arginine 48. Active-site for autocatalytic cleavage activity residues include serine 134 and lysine 171.

Belongs to the peptidase S24 family. Homodimer.

The catalysed reaction is Hydrolysis of Ala-|-Gly bond in repressor LexA.. Represses a number of genes involved in the response to DNA damage (SOS response), including recA and lexA. In the presence of single-stranded DNA, RecA interacts with LexA causing an autocatalytic cleavage which disrupts the DNA-binding part of LexA, leading to derepression of the SOS regulon and eventually DNA repair. The chain is LexA repressor from Ralstonia nicotianae (strain ATCC BAA-1114 / GMI1000) (Ralstonia solanacearum).